The chain runs to 348 residues: Rhodopsin (348 aa).

Met-1 is modified (N-acetylmethionine). Residues 1 to 36 (MNGTEGPNFYVPFSNATGVVRSPFEYPQYYLAEPWQ) lie on the Extracellular side of the membrane. 2 N-linked (GlcNAc...) asparagine glycosylation sites follow: Asn-2 and Asn-15. A helical membrane pass occupies residues 37-61 (FSMLAAYMFLLIVLGFPINFLTLYV). The Cytoplasmic portion of the chain corresponds to 62-73 (TVQHKKLRTPLN). A helical transmembrane segment spans residues 74–96 (YILLNLAVADLFMVFGGFTTTLY). Residues 97 to 110 (TSLHGYFVFGPTGC) lie on the Extracellular side of the membrane. Cys-110 and Cys-187 form a disulfide bridge. Residues 111-133 (NAEGFFATLGGEIALWSLVVLAI) form a helical membrane-spanning segment. The short motif at 134-136 (ERY) is the 'Ionic lock' involved in activated form stabilization element. Residues 134–152 (ERYVVVCKPMSNFRFGENH) are Cytoplasmic-facing. Residues 153 to 173 (AIMGVAFTWVMALACAAPPLF) form a helical membrane-spanning segment. Topologically, residues 174 to 202 (GWSRYIPEGLQCSCGIDYYTLKPEVNNES) are extracellular. Position 201 (Glu-201) interacts with Zn(2+). Residues 203-224 (FVIYMFVVHFTIPMIVIFFCYG) traverse the membrane as a helical segment. Residues 225–252 (QLVFTVKEARAQQQESATTQKAEKEVTR) lie on the Cytoplasmic side of the membrane. A helical transmembrane segment spans residues 253–274 (MVIIMVIAFLICWVPYASVAFY). Residues 275-286 (IFTHQGSNFGPI) lie on the Extracellular side of the membrane. Zn(2+) is bound at residue Gln-279. A helical transmembrane segment spans residues 287–308 (FMTIPAFFAKSASIYNPVIYIM). An N6-(retinylidene)lysine modification is found at Lys-296. At 309–348 (MNKQFRNCMLTTICCGKNPLGDDEASATVSKTETSQVAPA) the chain is on the cytoplasmic side. Residues Cys-322 and Cys-323 are each lipidated (S-palmitoyl cysteine). Positions 330 to 348 (DDEASATVSKTETSQVAPA) are interaction with SAG. Phosphoserine is present on Ser-334. Thr-336 carries the post-translational modification Phosphothreonine. Ser-338 bears the Phosphoserine mark. A phosphothreonine mark is found at Thr-340 and Thr-342. Phosphoserine is present on Ser-343.

It belongs to the G-protein coupled receptor 1 family. Opsin subfamily. As to quaternary structure, homodimer. May form a complex composed of RHO, GRK1 and RCVRN in a Ca(2+)-dependent manner; RCVRN prevents the interaction between GRK1 and RHO. Interacts with GRK1. Interacts (phosphorylated form) with SAG. Interacts with GNAT1. Interacts with GNAT3. SAG and G-proteins compete for a common binding site. Interacts with PRCD; the interaction promotes PRCD stability. Forms a complex with ASAP1 and ARF4. Forms a complex with ASAP1, RAB11A, Rabin8/RAB3IP, ARF4 and RAB11FIP3; the complex regulates Golgi-to-cilia rhodopsin/RHO transport in photoreceptors. Phosphorylated on some or all of the serine and threonine residues present in the C-terminal region. Post-translationally, contains one covalently linked retinal chromophore. Upon light absorption, the covalently bound 11-cis-retinal is converted to all-trans-retinal. After hydrolysis of the Schiff base and release of the covalently bound all-trans-retinal, active rhodopsin is regenerated by binding of a fresh molecule of 11-cis-retinal.

The protein resides in the membrane. It localises to the cell projection. Its subcellular location is the cilium. It is found in the photoreceptor outer segment. Its function is as follows. Photoreceptor required for image-forming vision at low light intensity. Required for photoreceptor cell viability after birth. Light-induced isomerization of 11-cis to all-trans retinal triggers a conformational change that activates signaling via G-proteins. Subsequent receptor phosphorylation mediates displacement of the bound G-protein alpha subunit by the arrestin SAG and terminates signaling. This chain is Rhodopsin (RHO), found in Macaca fascicularis (Crab-eating macaque).